The primary structure comprises 438 residues: Adenylosuccinate synthetase (438 aa).

GTP is bound by residues G13–K19 and G41–T43. The Proton acceptor role is filled by D14. Mg(2+) contacts are provided by D14 and G41. Residues D14 to K17, N39 to H42, T130, R144, Q225, T240, and R312 contribute to the IMP site. H42 (proton donor) is an active-site residue. A308 to R314 serves as a coordination point for substrate. GTP-binding positions include R314, K340 to D342, and S422 to G424.

Belongs to the adenylosuccinate synthetase family. As to quaternary structure, homodimer. It depends on Mg(2+) as a cofactor.

The protein localises to the cytoplasm. It carries out the reaction IMP + L-aspartate + GTP = N(6)-(1,2-dicarboxyethyl)-AMP + GDP + phosphate + 2 H(+). It functions in the pathway purine metabolism; AMP biosynthesis via de novo pathway; AMP from IMP: step 1/2. Its function is as follows. Plays an important role in the de novo pathway of purine nucleotide biosynthesis. Catalyzes the first committed step in the biosynthesis of AMP from IMP. The protein is Adenylosuccinate synthetase of Ruthia magnifica subsp. Calyptogena magnifica.